The primary structure comprises 383 residues: Chaperone protein DnaJ (383 aa).

Positions 5 to 70 constitute a J domain; that stretch reads DYYELLGVEK…QKRAAYDRFG (66 aa). The CR-type zinc finger occupies 137 to 215; sequence GKTATVKVPS…CGGSGRTRKE (79 aa). Positions 150, 153, 167, 170, 189, 192, 203, and 206 each coordinate Zn(2+). CXXCXGXG motif repeat units follow at residues 150–157, 167–174, 189–196, and 203–210; these read CEDCKGTG, CSACHGHG, CPTCQGMG, and CRSCGGSG.

This sequence belongs to the DnaJ family. In terms of assembly, homodimer. It depends on Zn(2+) as a cofactor.

The protein resides in the cytoplasm. Its function is as follows. Participates actively in the response to hyperosmotic and heat shock by preventing the aggregation of stress-denatured proteins and by disaggregating proteins, also in an autonomous, DnaK-independent fashion. Unfolded proteins bind initially to DnaJ; upon interaction with the DnaJ-bound protein, DnaK hydrolyzes its bound ATP, resulting in the formation of a stable complex. GrpE releases ADP from DnaK; ATP binding to DnaK triggers the release of the substrate protein, thus completing the reaction cycle. Several rounds of ATP-dependent interactions between DnaJ, DnaK and GrpE are required for fully efficient folding. Also involved, together with DnaK and GrpE, in the DNA replication of plasmids through activation of initiation proteins. In Paramagnetospirillum magneticum (strain ATCC 700264 / AMB-1) (Magnetospirillum magneticum), this protein is Chaperone protein DnaJ.